We begin with the raw amino-acid sequence, 307 residues long: Probable E3 SUMO-protein ligase RNF212 (307 aa).

Residues 7–46 form an RING-type zinc finger; the sequence is CNRCFQSPHRKSSFSLTSCGHVYCHSCLLKGTKNECVICQ. Residues 91 to 124 adopt a coiled-coil conformation; that stretch reads RRRLVAFYQEKISQLEESLRKSVLQIKQLQSMRS. The interval 164–291 is disordered; that stretch reads LTPPARKPEM…KMSPFLPSTP (128 aa). Composition is skewed to polar residues over residues 202-213, 233-252, and 259-271; these read LSLTPSHASMTK, SQLS…SSWT, and ISIS…QCAG.

As to expression, specifically expressed in meiocytes of the gonads.

The protein localises to the nucleus. The protein resides in the chromosome. It functions in the pathway protein modification; protein sumoylation. Functionally, SUMO E3 ligase that acts as a regulator of crossing-over during meiosis: required to couple chromosome synapsis to the formation of crossover-specific recombination complexes. Localizes to recombination sites and stabilizes meiosis-specific recombination factors, such as MutS-gamma complex proteins (MSH4 and MSH5) and TEX11. May mediate sumoylation of target proteins MSH4 and/or MSH5, leading to enhance their binding to recombination sites. Acts as a limiting factor for crossover designation and/or reinforcement and plays an antagonist role with CCNB1IP1/HEI10 in the regulation of meiotic recombination. The sequence is that of Probable E3 SUMO-protein ligase RNF212 (Rnf212) from Mus musculus (Mouse).